The sequence spans 469 residues: Glutamine synthetase (469 aa).

Positions His-12 to Thr-97 constitute a GS beta-grasp domain. Residues Pro-105 to Val-469 enclose the GS catalytic domain. Residues Glu-130 and Glu-132 each contribute to the Mg(2+) site. ATP is bound at residue Glu-208. Positions 213 and 221 each coordinate Mg(2+). Residues Asn-265–Gly-266 and Gly-266 each bind L-glutamate. Residue His-270 participates in Mg(2+) binding. Residues His-272–Ser-274 and Ser-274 each bind ATP. L-glutamate is bound by residues Arg-322, Glu-328, and Arg-340. Arg-340, Arg-345, and Lys-353 together coordinate ATP. Glu-358 lines the Mg(2+) pocket. Position 360 (Arg-360) interacts with L-glutamate. Tyr-398 carries the O-AMP-tyrosine modification.

It belongs to the glutamine synthetase family. As to quaternary structure, oligomer of 12 subunits arranged in the form of two hexameric ring. Mg(2+) is required as a cofactor.

The protein resides in the cytoplasm. The catalysed reaction is L-glutamate + NH4(+) + ATP = L-glutamine + ADP + phosphate + H(+). The activity of this enzyme could be controlled by adenylation under conditions of abundant glutamine. In terms of biological role, catalyzes the ATP-dependent biosynthesis of glutamine from glutamate and ammonia. The protein is Glutamine synthetase of Pseudomonas aeruginosa (strain ATCC 15692 / DSM 22644 / CIP 104116 / JCM 14847 / LMG 12228 / 1C / PRS 101 / PAO1).